The primary structure comprises 174 residues: Cell division protein FtsL (174 aa).

Residues 1–38 (MLAAPRELSYIPQPVVSSKQSPRSGLSNRRRESRARQK) are Cytoplasmic-facing. The chain crosses the membrane as a helical span at residues 39-59 (ILLLGLVLMGFVIGLSLTFLT). The Extracellular portion of the chain corresponds to 60-174 (MQVLIKGYKI…EPARQAGAGV (115 aa)).

The protein belongs to the FtsL family.

Its subcellular location is the cell membrane. Its function is as follows. Essential cell division protein. This is Cell division protein FtsL from Moorella thermoacetica (strain ATCC 39073 / JCM 9320).